The primary structure comprises 140 residues: Putative nickel-responsive regulator 3 (140 aa).

The Ni(2+) site is built by H81, H92, H94, and C100.

The protein belongs to the transcriptional regulatory CopG/NikR family. Ni(2+) is required as a cofactor.

Its function is as follows. Transcriptional regulator. This Methanosarcina acetivorans (strain ATCC 35395 / DSM 2834 / JCM 12185 / C2A) protein is Putative nickel-responsive regulator 3.